The following is a 393-amino-acid chain: Pyridinium-3,5-bisthiocarboxylic acid mononucleotide nickel insertion protein (393 aa).

The protein belongs to the LarC family.

The enzyme catalyses Ni(II)-pyridinium-3,5-bisthiocarboxylate mononucleotide = pyridinium-3,5-bisthiocarboxylate mononucleotide + Ni(2+). Functionally, involved in the biosynthesis of a nickel-pincer cofactor ((SCS)Ni(II) pincer complex). Binds Ni(2+), and functions in nickel delivery to pyridinium-3,5-bisthiocarboxylic acid mononucleotide (P2TMN), to form the mature cofactor. Is thus probably required for the activation of nickel-pincer cofactor-dependent enzymes. This chain is Pyridinium-3,5-bisthiocarboxylic acid mononucleotide nickel insertion protein, found in Nocardioides sp. (strain ATCC BAA-499 / JS614).